The chain runs to 250 residues: GILT-like protein 1 (250 aa).

The N-terminal stretch at 1–21 (MSHKIAAVCLLMSCLIATAYS) is a signal peptide. An N-linked (GlcNAc...) asparagine glycan is attached at asparagine 157.

This sequence belongs to the GILT family. Conjugated to URM1, a ubiquitin-like protein.

It is found in the secreted. Involved in the immune response to bacterial infection. The protein is GILT-like protein 1 of Drosophila melanogaster (Fruit fly).